We begin with the raw amino-acid sequence, 138 residues long: Histone H2AX (138 aa).

The tract at residues 1–23 is disordered; sequence MSTTGKGGKAKGKTASSKQVSRS. S2 is subject to N-acetylserine. N6-acetyllysine is present on residues K6, K9, K11, K13, and K18. At S123 the chain carries Phosphoserine. A Glycyl lysine isopeptide (Lys-Gly) (interchain with G-Cter in ubiquitin) cross-link involves residue K124. Phosphoserine is present on residues S125, S130, and S135. Positions 135-136 match the [ST]-Q motif motif; that stretch reads SQ.

This sequence belongs to the histone H2A family. As to quaternary structure, the nucleosome is a histone octamer containing two molecules each of H2A, H2B, H3 and H4 assembled in one H3-H4 heterotetramer and two H2A-H2B heterodimers. The octamer wraps approximately 147 bp of DNA. In terms of processing, monoubiquitination of Lys-124 gives a specific tag for epigenetic transcriptional repression. Post-translationally, phosphorylated to form H2AX134ph (gamma-H2AX) in response to DNA double-strand breaks (DSBs) generated by exogenous genotoxic agents in both the mitotic MIC and the amitotic MAC. Gamma-H2AX is also found when programmed DNA rearrangements occur, namely homologous recombination in the MIC during prophase of meiosis, and chromosome fragmentation and DNA elimination in developing MACs. Gamma-H2AX is important to recover from exogenous DNA damage and to repair breaks associated with normal micronuclear meiosis and mitosis and macronuclear amitotic division. Acetylation occurs almost exclusively in the MAC.

The protein resides in the nucleus. It localises to the chromosome. Core component of nucleosome which plays a central role in DNA double strand break (DSB) repair. Nucleosomes wrap and compact DNA into chromatin, limiting DNA accessibility to the cellular machineries which require DNA as a template. Histones thereby play a central role in transcription regulation, DNA repair, DNA replication and chromosomal stability. DNA accessibility is regulated via a complex set of post-translational modifications of histones, also called histone code, and nucleosome remodeling. The polypeptide is Histone H2AX (HTA1) (Tetrahymena thermophila (strain SB210)).